The sequence spans 241 residues: uncharacterized protein (241 aa).

6 helical membrane-spanning segments follow: residues 1 to 21 (MMMA…GILL), 43 to 63 (FPII…LKNL), 75 to 95 (LPIY…FYAI), 108 to 128 (IYVL…VLML), 160 to 180 (VLTS…HGLL), and 200 to 220 (ILVI…IASG).

The protein to M.jannaschii MJ0871, MJ0880 and MJ1556.

Its subcellular location is the cell membrane. This is an uncharacterized protein from Methanocaldococcus jannaschii (strain ATCC 43067 / DSM 2661 / JAL-1 / JCM 10045 / NBRC 100440) (Methanococcus jannaschii).